We begin with the raw amino-acid sequence, 181 residues long: MTVSAQNLVWIDMEMTGLDPEQNVVLEIATIVTDKDLNVLAEGPVIAIHQSDEELAKMDDWNVNTHTNSGLVARVKASQHDEAQAVAETLDFIRQWVPERTSPLCGNSIGQDRRFMVKHMSDLEAFFHYRNVDVSTIKELVRRWQPALLDQFKKSGTHQALDDIRESIAELQFYRSHVFKI.

Residues 8–171 (LVWIDMEMTG…DDIRESIAEL (164 aa)) enclose the Exonuclease domain. Residue Tyr129 is part of the active site.

This sequence belongs to the oligoribonuclease family.

The protein localises to the cytoplasm. Functionally, 3'-to-5' exoribonuclease specific for small oligoribonucleotides. This is Oligoribonuclease from Aeromonas hydrophila subsp. hydrophila (strain ATCC 7966 / DSM 30187 / BCRC 13018 / CCUG 14551 / JCM 1027 / KCTC 2358 / NCIMB 9240 / NCTC 8049).